Here is a 179-residue protein sequence, read N- to C-terminus: ATP synthase subunit delta (179 aa).

It belongs to the ATPase delta chain family. In terms of assembly, F-type ATPases have 2 components, F(1) - the catalytic core - and F(0) - the membrane proton channel. F(1) has five subunits: alpha(3), beta(3), gamma(1), delta(1), epsilon(1). F(0) has three main subunits: a(1), b(2) and c(10-14). The alpha and beta chains form an alternating ring which encloses part of the gamma chain. F(1) is attached to F(0) by a central stalk formed by the gamma and epsilon chains, while a peripheral stalk is formed by the delta and b chains.

Its subcellular location is the cell membrane. Functionally, f(1)F(0) ATP synthase produces ATP from ADP in the presence of a proton or sodium gradient. F-type ATPases consist of two structural domains, F(1) containing the extramembraneous catalytic core and F(0) containing the membrane proton channel, linked together by a central stalk and a peripheral stalk. During catalysis, ATP synthesis in the catalytic domain of F(1) is coupled via a rotary mechanism of the central stalk subunits to proton translocation. This protein is part of the stalk that links CF(0) to CF(1). It either transmits conformational changes from CF(0) to CF(1) or is implicated in proton conduction. This is ATP synthase subunit delta from Clostridium botulinum (strain Loch Maree / Type A3).